The chain runs to 697 residues: Transmembrane protein 168 (697 aa).

The next 3 membrane-spanning stretches (helical) occupy residues 36–56, 63–83, and 89–109; these read LGYL…YVRW, LILV…ILYY, and AASL…LCFL. N111 carries N-linked (GlcNAc...) asparagine glycosylation. The next 7 helical transmembrane spans lie at 172–192, 199–219, 223–243, 265–285, 293–313, 352–372, and 380–400; these read MLVE…MLII, FLAI…SLET, PIAF…DIYF, LSVV…AFKL, FVIP…IIFL, FCLI…ILGA, and GIFL…HGLF. 2 N-linked (GlcNAc...) asparagine glycosylation sites follow: N533 and N598. The chain crosses the membrane as a helical span at residues 646 to 666; the sequence is ITYPLVHLANWLCGLNLFWIC.

Belongs to the TMEM168 family.

Its subcellular location is the nucleus membrane. In terms of biological role, plays a key role in maintaining the cardiac electrical stability by modulating cell surface expression of SCN5A. May play a role in the modulation of anxiety behavior by regulating GABAergic neuronal system in the nucleus accumbens. The chain is Transmembrane protein 168 from Homo sapiens (Human).